The following is a 520-amino-acid chain: Ribonuclease Y (520 aa).

Residues 4 to 24 traverse the membrane as a helical segment; it reads VSGILLVLIGLLAGVGLGVLL. In terms of domain architecture, KH spans 210-270; sequence TVSVVNLPNE…VRREVARVSL (61 aa). The region spanning 336 to 429 is the HD domain; it reads VLQHSREVAF…VQAADALSGA (94 aa).

Belongs to the RNase Y family.

Its subcellular location is the cell membrane. In terms of biological role, endoribonuclease that initiates mRNA decay. In Syntrophobacter fumaroxidans (strain DSM 10017 / MPOB), this protein is Ribonuclease Y.